The sequence spans 286 residues: uncharacterized protein (286 aa).

It belongs to the chlamydial CPn_0389/CT_041/TC_0311 family.

This is an uncharacterized protein from Chlamydia muridarum (strain MoPn / Nigg).